Reading from the N-terminus, the 201-residue chain is Large ribosomal subunit protein eL15A (201 aa).

The interval 161 to 182 (SRGLTSIGKKSRGIGKGHRFNN) is disordered. The span at 169 to 179 (KKSRGIGKGHR) shows a compositional bias: basic residues.

Belongs to the eukaryotic ribosomal protein eL15 family. As to quaternary structure, component of the large ribosomal subunit (LSU). Mature yeast ribosomes consist of a small (40S) and a large (60S) subunit. The 40S small subunit contains 1 molecule of ribosomal RNA (18S rRNA) and at least 33 different proteins. The large 60S subunit contains 3 rRNA molecules (25S, 5.8S and 5S rRNA) and at least 46 different proteins.

It localises to the cytoplasm. It is found in the nucleus. Its subcellular location is the nucleolus. Component of the ribosome, a large ribonucleoprotein complex responsible for the synthesis of proteins in the cell. The small ribosomal subunit (SSU) binds messenger RNAs (mRNAs) and translates the encoded message by selecting cognate aminoacyl-transfer RNA (tRNA) molecules. The large subunit (LSU) contains the ribosomal catalytic site termed the peptidyl transferase center (PTC), which catalyzes the formation of peptide bonds, thereby polymerizing the amino acids delivered by tRNAs into a polypeptide chain. The nascent polypeptides leave the ribosome through a tunnel in the LSU and interact with protein factors that function in enzymatic processing, targeting, and the membrane insertion of nascent chains at the exit of the ribosomal tunnel. The protein is Large ribosomal subunit protein eL15A (rpl15) of Schizosaccharomyces pombe (strain 972 / ATCC 24843) (Fission yeast).